An 894-amino-acid polypeptide reads, in one-letter code: Translation factor GUF1 homolog, mitochondrial (894 aa).

The disordered stretch occupies residues Glu-157 to Asp-189. Positions Ser-174–Ser-188 are enriched in low complexity. Residues Glu-199–Ala-376 enclose the tr-type G domain. Residues Ala-208–Ser-215, Asp-269–His-273, and Asn-323–Asp-326 contribute to the GTP site. Residues Asp-649 to Asp-674 are disordered.

The protein belongs to the TRAFAC class translation factor GTPase superfamily. Classic translation factor GTPase family. LepA subfamily.

Its subcellular location is the mitochondrion inner membrane. The enzyme catalyses GTP + H2O = GDP + phosphate + H(+). Functionally, promotes mitochondrial protein synthesis. May act as a fidelity factor of the translation reaction, by catalyzing a one-codon backward translocation of tRNAs on improperly translocated ribosomes. Binds to mitochondrial ribosomes in a GTP-dependent manner. The chain is Translation factor GUF1 homolog, mitochondrial from Plasmodium knowlesi (strain H).